Here is a 123-residue protein sequence, read N- to C-terminus: Class I hydrophobin pri2 (123 aa).

Positions 1 to 18 are cleaved as a signal peptide; the sequence is MVAIKSLAILALPVMAMA. 4 disulfides stabilise this stretch: C31–C102, C38–C96, C39–C84, and C103–C116. N-linked (GlcNAc...) asparagine glycans are attached at residues N33 and N40.

The protein belongs to the fungal hydrophobin family. As to quaternary structure, self-assembles to form functional amyloid fibrils called rodlets. Self-assembly into fibrillar rodlets occurs spontaneously at hydrophobic:hydrophilic interfaces and the rodlets further associate laterally to form amphipathic monolayers.

The protein localises to the secreted. It localises to the cell wall. In terms of biological role, aerial growth, conidiation, and dispersal of filamentous fungi in the environment rely upon a capability of their secreting small amphipathic proteins called hydrophobins (HPBs) with low sequence identity. Class I can self-assemble into an outermost layer of rodlet bundles on aerial cell surfaces, conferring cellular hydrophobicity that supports fungal growth, development and dispersal; whereas Class II form highly ordered films at water-air interfaces through intermolecular interactions but contribute nothing to the rodlet structure. This Cyclocybe aegerita (Black poplar mushroom) protein is Class I hydrophobin pri2.